The sequence spans 115 residues: Androgen-binding protein homolog (115 aa).

Residues 1-23 form the signal peptide; that stretch reads MKGTLLLLALLVTGELGFQTTEA.

The protein belongs to the secretoglobin family.

The protein resides in the secreted. The chain is Androgen-binding protein homolog from Mesocricetus auratus (Golden hamster).